A 295-amino-acid polypeptide reads, in one-letter code: Nucleotide-binding protein LSL_1171 (295 aa).

ATP is bound at residue 13–20 (GMSGAGKT). 63-66 (DLRS) contributes to the GTP binding site.

It belongs to the RapZ-like family.

In terms of biological role, displays ATPase and GTPase activities. The polypeptide is Nucleotide-binding protein LSL_1171 (Ligilactobacillus salivarius (strain UCC118) (Lactobacillus salivarius)).